The following is a 240-amino-acid chain: Large ribosomal subunit protein uL1 (240 aa).

It belongs to the universal ribosomal protein uL1 family. As to quaternary structure, part of the 50S ribosomal subunit.

Functionally, binds directly to 23S rRNA. The L1 stalk is quite mobile in the ribosome, and is involved in E site tRNA release. Protein L1 is also a translational repressor protein, it controls the translation of the L11 operon by binding to its mRNA. This Streptomyces griseus subsp. griseus (strain JCM 4626 / CBS 651.72 / NBRC 13350 / KCC S-0626 / ISP 5235) protein is Large ribosomal subunit protein uL1.